A 550-amino-acid polypeptide reads, in one-letter code: Undecaprenyl phosphate-alpha-4-amino-4-deoxy-L-arabinose arabinosyl transferase 2 (550 aa).

Transmembrane regions (helical) follow at residues 4–24 (LKPG…PLSF), 81–101 (FAVH…VYWL), 110–132 (WLGL…GTYA), 176–196 (FMTK…PWVI), 204–224 (VFIY…PWVI), 255–275 (APFW…LGLL), 288–308 (TQSG…FFSL), 313–333 (LPTY…RYAA), 348–368 (LLFG…WGLA), 381–401 (VLLG…TLRA), and 409–429 (AALC…QQVI).

Belongs to the glycosyltransferase 83 family.

It is found in the cell inner membrane. The catalysed reaction is 4-amino-4-deoxy-alpha-L-arabinopyranosyl di-trans,octa-cis-undecaprenyl phosphate + lipid IVA = lipid IIA + di-trans,octa-cis-undecaprenyl phosphate.. It participates in lipopolysaccharide metabolism; 4-amino-4-deoxy-beta-L-arabinose-lipid A biosynthesis. In terms of biological role, catalyzes the transfer of the L-Ara4N moiety of the glycolipid undecaprenyl phosphate-alpha-L-Ara4N to lipid A. The modified arabinose is attached to lipid A and is required for resistance to polymyxin and cationic antimicrobial peptides. This is Undecaprenyl phosphate-alpha-4-amino-4-deoxy-L-arabinose arabinosyl transferase 2 from Sodalis glossinidius (strain morsitans).